We begin with the raw amino-acid sequence, 238 residues long: Probable transcriptional regulatory protein SERP0322 (238 aa).

Belongs to the TACO1 family. YeeN subfamily.

It localises to the cytoplasm. This chain is Probable transcriptional regulatory protein SERP0322, found in Staphylococcus epidermidis (strain ATCC 35984 / DSM 28319 / BCRC 17069 / CCUG 31568 / BM 3577 / RP62A).